A 377-amino-acid chain; its full sequence is Nitric oxide reductase FlRd-NAD(+) reductase (377 aa).

It belongs to the FAD-dependent oxidoreductase family. FAD is required as a cofactor.

Its subcellular location is the cytoplasm. It catalyses the reaction 2 reduced [nitric oxide reductase rubredoxin domain] + NAD(+) + H(+) = 2 oxidized [nitric oxide reductase rubredoxin domain] + NADH. Its pathway is nitrogen metabolism; nitric oxide reduction. Its function is as follows. One of at least two accessory proteins for anaerobic nitric oxide (NO) reductase. Reduces the rubredoxin moiety of NO reductase. This chain is Nitric oxide reductase FlRd-NAD(+) reductase, found in Escherichia coli O17:K52:H18 (strain UMN026 / ExPEC).